A 381-amino-acid chain; its full sequence is Sensor histidine kinase FlgS (381 aa).

Residues 177–381 (HLAHEIRNPV…TFEIKILNAS (205 aa)) enclose the Histidine kinase domain. At His180 the chain carries Phosphohistidine; by autocatalysis.

In terms of assembly, interacts (via its C-terminal kinase domain) with FlhA (via N-terminus). Post-translationally, autophosphorylated.

The catalysed reaction is ATP + protein L-histidine = ADP + protein N-phospho-L-histidine.. Member of the two-component regulatory system FlgR/FlgS that induces the transcriptional induction of the genes needed in motility and flagellar biogenesis. Also plays an essential role in bacterial survival at pH 2.5 independently of FlgR. Functions as a sensor protein kinase which is autophosphorylated at a histidine residue and transfers its phosphate group to the conserved aspartic acid residue in the regulatory domain of FlgR. In turn, FlgR functions as a transcriptional regulator initiating transcription from RpoN-dependent promoters. The polypeptide is Sensor histidine kinase FlgS (flgS) (Helicobacter pylori (strain ATCC 700392 / 26695) (Campylobacter pylori)).